Reading from the N-terminus, the 189-residue chain is Thioredoxin-like protein CITRX, chloroplastic (189 aa).

Residues 1-36 constitute a chloroplast transit peptide; that stretch reads MAMAAAASLLPACAAPTLPGRAFRPRRNSTPTASLS. The 118-residue stretch at 72–189 folds into the Thioredoxin domain; sequence GSGKYIAPDY…MIRNIIDNEL (118 aa). Active-site nucleophile residues include C112 and C115. C112 and C115 are disulfide-bonded.

This sequence belongs to the thioredoxin family. Plant CITRX-type subfamily.

It localises to the plastid. It is found in the chloroplast. Its function is as follows. Probable thiol-disulfide oxidoreductase that may play a role in proper chloroplast development. In Oryza sativa subsp. indica (Rice), this protein is Thioredoxin-like protein CITRX, chloroplastic.